Consider the following 142-residue polypeptide: uncharacterized protein (142 aa).

The Peptidase C39 domain occupies 18–137 (QSRSYSCGPA…RIFTGNVLVV (120 aa)).

This is an uncharacterized protein from Methanothermobacter thermautotrophicus (strain ATCC 29096 / DSM 1053 / JCM 10044 / NBRC 100330 / Delta H) (Methanobacterium thermoautotrophicum).